A 142-amino-acid polypeptide reads, in one-letter code: Large ribosomal subunit protein uL22c (142 aa).

This sequence belongs to the universal ribosomal protein uL22 family. As to quaternary structure, part of the 50S ribosomal subunit.

It is found in the plastid. Its subcellular location is the chloroplast. Functionally, this protein binds specifically to 23S rRNA. The globular domain of the protein is located near the polypeptide exit tunnel on the outside of the subunit, while an extended beta-hairpin is found that lines the wall of the exit tunnel in the center of the 70S ribosome. This Pinus koraiensis (Korean pine) protein is Large ribosomal subunit protein uL22c (rpl22).